Consider the following 1653-residue polypeptide: Alpha-2-macroglobulin (1653 aa).

An N-terminal signal peptide occupies residues 1–17; sequence MKKLRVAACMLMLALAG. Residue Cys18 is the site of N-palmitoyl cysteine attachment. A lipid anchor (S-diacylglycerol cysteine) is attached at Cys18. The isoglutamyl cysteine thioester (Cys-Gln) cross-link spans 1187-1190; sequence CLEQ. A coiled-coil region spans residues 1559–1589; the sequence is NQNLANGSASLEQSGGEVQNLLNQMQQASIK.

This sequence belongs to the protease inhibitor I39 (alpha-2-macroglobulin) family. Bacterial alpha-2-macroglobulin subfamily. May form homooligomers.

The protein localises to the cell inner membrane. Functionally, protects the bacterial cell from host peptidases. Acts by a 'trapping' mechanism. Cleavage of the bait-region domain by host peptidases leads to a global conformational change, which results in entrapment of the host peptidase and activation of the thioester bond that covalently binds the attacking host peptidase. Trapped peptidases are still active except against very large substrates. May protect the entire periplam, including the lipoproteins anchored to the periplasmic side of the outer membrane, against intruding endopeptidases. The polypeptide is Alpha-2-macroglobulin (yfhM) (Escherichia coli (strain K12)).